An 852-amino-acid chain; its full sequence is MLITERKHFRSGRIAQSMSEANLIDMEAGKLSKSCNITECQDPDLLHNWPDAFTLRGNNASKVANPFWNQLSASNPFLDDITQLRNNRKRNNISILKEDPFLFCREIENGNSFDSSGDELDVHQLLRQTSSRNSGRSKSVSELLDILDDTAHAHQSIHNSDQILLHDLEWLKNDREAYKMAWLSQRQLARSCLDLNTISQSPGWAQTQLAEVTIACKVNHQGGSVQLPESDITVHVPQGHVAVGEFQEVSLRAFLDPPHMLNHDLSCTVSPLLEIMLGNLNTMEALLLEMKIGAEVRKDPFSQVMTEMVCLHSLGKEGPFKVLSNCYIYKDTIQVKLIDLSQVMYLVVAAQAKALPSPAATIWDYIHKTTSIGIYGPKYIHPSFTVVLTVCGHNYMPGQLTISDIKKGGKNISPVVFQLWGKQSFLLDKPQDLSISIFSCDPDFEVKTEGERKEIKQKQLEAGEVVHQQFLFSLVEHREMHLFDFCVQVEPPNGEPVAQFSITTPDPTPNLKRLSNLPGYLQKKEEIKSAPLSPKILVKYPTFQDKTLNFSNYGVTLKAVLRQSKIDYFLEYFKGDTIALLGEGKVKAIGQSKVKEWYVGVLRGKIGLVHCKNVKVISKEQVMFMSDSVFTTRNLLEQIVLPLKKLTYIYSVVLTLVSEKVYDWKVLADVLGYSHLSLEDFDQIQADKESEKVSYVIKKLKEDCHTERNTRKFLYELIVALLKMDCQELVARLIQEAAVLTSAVKLGKGWRELAEKLVRLTKQQMEAYEIPHRGNTGDVAVEMMWKPAYDFLYTWSAHYGNNYRDVLQDLQSALDRMKNPVTKHWRELTGVLILVNSLEVLRVTAFSTSEEV.

Ser-19 is subject to Phosphoserine. A ZU5 domain is found at 212–349 (VTIACKVNHQ…LSQVMYLVVA (138 aa)). The 71-residue stretch at 549-619 (NFSNYGVTLK…HCKNVKVISK (71 aa)) folds into the SH3 domain.

As to quaternary structure, interacts with FASLG. In terms of tissue distribution, preferentially expressed in metastasizing tumors.

It is found in the cytoplasm. The protein localises to the nucleus. Functionally, acts as a transcription activator for MET and as a key regulator of HGF-MET signaling. Promotes cell motility, proliferation and hepatocyte growth factor (HGF)-dependent scattering in vitro and tumor growth and metastasis in vivo. This Homo sapiens (Human) protein is Metastasis-associated in colon cancer protein 1 (MACC1).